Here is a 541-residue protein sequence, read N- to C-terminus: Protein wntless homolog (541 aa).

The Cytoplasmic segment spans residues 1 to 15 (MAGAIIENMGTKKLC). The helical transmembrane segment at 16-36 (IVGGILLVFQIIAFLVGGLIA) threads the bilayer. The Lumenal segment spans residues 37 to 232 (PGPTTAVSYM…GIHQNGGFTK (196 aa)). The tract at residues 101–232 (MEMSPWFQFM…GIHQNGGFTK (132 aa)) is interaction with Wnt proteins. Residues 233 to 253 (VWFAMKTFLTPSIFIIMVWYW) traverse the membrane as a helical segment. The Cytoplasmic segment spans residues 254 to 268 (RRITMMSRPPVLLEK). A helical membrane pass occupies residues 269 to 289 (VIFALGISMTFINIPVEWFSI). The Lumenal portion of the chain corresponds to 290–303 (GFDWTWMLLFGDIR). A helical membrane pass occupies residues 304 to 324 (QGIFYAMLLSFWIIFCGEHMM). Residues 325-331 (DQHERNH) lie on the Cytoplasmic side of the membrane. The chain crosses the membrane as a helical span at residues 332 to 352 (IAGYWKQVGPIAVGSFCLFIF). Residues 353 to 380 (DMCERGVQLTNPFYSIWTTDIGTELAMA) are Lumenal-facing. A helical membrane pass occupies residues 381-401 (FIIVAGICLCLYFLFLCFMVF). At 402–431 (QVFRNISGKQSSLPAMSKVRRLHYEGLIFR) the chain is on the cytoplasmic side. Residues 432–452 (FKFLMLITLACAAMTVIFFIV) form a helical membrane-spanning segment. Over 453–471 (SQVTEGHWKWGGVTVQVNS) the chain is Lumenal. The helical transmembrane segment at 472-492 (AFFTGIYGMWNLYVFALMFLY) threads the bilayer. Residues 493-541 (APSHKNYGEDQSNGDLGVHSGEELQLTTTITHVDGPTEIYKLTRKEAQE) lie on the Cytoplasmic side of the membrane.

The protein belongs to the wntless family. In terms of assembly, interacts with WNT3A. Interacts with WNT1, WNT3 and WNT5A.

It is found in the golgi apparatus membrane. The protein resides in the cytoplasmic vesicle membrane. The protein localises to the cell membrane. Its subcellular location is the endoplasmic reticulum membrane. It localises to the early endosome membrane. Functionally, regulates Wnt proteins sorting and secretion in a feedback regulatory mechanism. This reciprocal interaction plays a key role in the regulation of expression, subcellular location, binding and organelle-specific association of Wnt proteins. Also plays an important role in establishment of the anterior-posterior body axis formation during development. This chain is Protein wntless homolog (WLS), found in Pongo abelii (Sumatran orangutan).